A 200-amino-acid chain; its full sequence is Probable GTP-binding protein EngB (200 aa).

Residues 23 to 197 form the EngB-type G domain; that stretch reads KNSEVVFIGR…RERVLKDVLG (175 aa). Residues 31–38, 58–62, 83–86, 153–156, and 175–177 each bind GTP; these read GRSNVGKS, GKTQL, DLPG, TKMD, and FTA. 2 residues coordinate Mg(2+): Ser-38 and Thr-60.

It belongs to the TRAFAC class TrmE-Era-EngA-EngB-Septin-like GTPase superfamily. EngB GTPase family. Mg(2+) is required as a cofactor.

In terms of biological role, necessary for normal cell division and for the maintenance of normal septation. The protein is Probable GTP-binding protein EngB of Wolinella succinogenes (strain ATCC 29543 / DSM 1740 / CCUG 13145 / JCM 31913 / LMG 7466 / NCTC 11488 / FDC 602W) (Vibrio succinogenes).